Reading from the N-terminus, the 346-residue chain is DnaJ protein ERDJ3B (346 aa).

The first 23 residues, 1-23, serve as a signal peptide directing secretion; it reads MAIRWSELCIVLFALSYAICVLA. One can recognise a J domain in the interval 26-91; the sequence is SYYDVLQVPK…EKREIYNKYG (66 aa). Asn267 is a glycosylation site (N-linked (GlcNAc...) asparagine).

Interacts with SDF2 and MED37A/BIP1. Post-translationally, N-glycosylated. In terms of tissue distribution, expressed in leaves, flower buds and flowers.

The protein localises to the endoplasmic reticulum lumen. Regulates protein folding in the endoplasmic reticulum (ER) lumen. Forms a complex in the ER with SDF2 and MED37A/BIP1 which is required for the proper accumulation and function of the surface-exposed leucine-rich repeat receptor kinases EFR involved in pathogen-associated molecular pattern (PAMP) triggered immunity. This is DnaJ protein ERDJ3B (ERDJ3B) from Arabidopsis thaliana (Mouse-ear cress).